Reading from the N-terminus, the 1463-residue chain is Alpha-agarase (1463 aa).

Positions 1 to 27 (MITSSKKIVSAMLSTSLWIGVASAAYA) are cleaved as a signal peptide. Residues 28-684 (ETTNVEAEGY…PSTLSESIFT (657 aa)) constitute a propeptide that is removed on maturation. Disordered stretches follow at residues 166–191 (VTPE…PGTP) and 512–549 (TDDI…PQPG). Residues 518–536 (CANTPSGETANATGCSSSQ) are compositionally biased toward polar residues. Residues 534-677 (SSQEGGGTDP…GGTNFVHPST (144 aa)) enclose the PA14 domain. In terms of domain architecture, CBM6 spans 701 to 832 (IIVELESFVF…QWSGDRVRFT (132 aa)).

This sequence belongs to the glycosyl hydrolase 96 family. Monomer. Ca(2+) serves as cofactor.

It catalyses the reaction Endohydrolysis of 1,3-alpha-L-galactosidic linkages in agarose, yielding agarotetraose as the major product.. Functionally, alpha-agarase. Hydrolyzes agarose, agarohexaose, neoagarohexaose and porphyran. Hydrolysis of porphyran by this enzyme improves its antioxidant activity. Does not hydrolyze kappa-carrageenan, iota-carrageenen or lambda-carrageenan. In Thalassotalea agarivorans (Thalassomonas agarivorans), this protein is Alpha-agarase.